The primary structure comprises 299 residues: tRNA dimethylallyltransferase (299 aa).

11–18 (GPTAVGKT) provides a ligand contact to ATP. 13-18 (TAVGKT) is a binding site for substrate. The interval 36–39 (DSQQ) is interaction with substrate tRNA.

This sequence belongs to the IPP transferase family. Monomer. The cofactor is Mg(2+).

It carries out the reaction adenosine(37) in tRNA + dimethylallyl diphosphate = N(6)-dimethylallyladenosine(37) in tRNA + diphosphate. Its function is as follows. Catalyzes the transfer of a dimethylallyl group onto the adenine at position 37 in tRNAs that read codons beginning with uridine, leading to the formation of N6-(dimethylallyl)adenosine (i(6)A). The sequence is that of tRNA dimethylallyltransferase from Streptococcus pyogenes serotype M49 (strain NZ131).